The sequence spans 605 residues: Condensin-2 complex subunit H2 (605 aa).

Thr-19 carries the phosphothreonine modification. Phosphoserine is present on residues Ser-95, Ser-200, Ser-208, Ser-228, and Ser-232. The disordered stretch occupies residues 194–331 (LEPEGMSPME…PFDSLESKPF (138 aa)). A compositionally biased stretch (acidic residues) spans 256–266 (GEDEDAEEAVE). A phosphoserine mark is found at Ser-282, Ser-284, Ser-466, and Ser-492.

The protein belongs to the CND2 H2 (condensin-2 subunit 2) family. In terms of assembly, component of the condensin-2 complex, which contains the SMC2 and SMC4 heterodimer, and three non SMC subunits, NCAPG2, NCAPH2 and NCAPD3 that probably regulate the complex.

The protein localises to the nucleus. It localises to the chromosome. Regulatory subunit of the condensin-2 complex, a complex that seems to provide chromosomes with an additional level of organization and rigidity and in establishing mitotic chromosome architecture. May promote the resolution of double-strand DNA catenanes (intertwines) between sister chromatids. Condensin-mediated compaction likely increases tension in catenated sister chromatids, providing directionality for type II topoisomerase-mediated strand exchanges toward chromatid decatenation. Required for decatenation of chromatin bridges at anaphase. Early in neurogenesis, may play an essential role to ensure accurate mitotic chromosome condensation in neuron stem cells, ultimately affecting neuron pool and cortex size. Seems to have lineage-specific role in T-cell development. This is Condensin-2 complex subunit H2 (NCAPH2) from Homo sapiens (Human).